A 345-amino-acid polypeptide reads, in one-letter code: UDP-3-O-acylglucosamine N-acyltransferase (345 aa).

The Proton acceptor role is filled by H252.

The protein belongs to the transferase hexapeptide repeat family. LpxD subfamily. As to quaternary structure, homotrimer.

The enzyme catalyses a UDP-3-O-[(3R)-3-hydroxyacyl]-alpha-D-glucosamine + a (3R)-hydroxyacyl-[ACP] = a UDP-2-N,3-O-bis[(3R)-3-hydroxyacyl]-alpha-D-glucosamine + holo-[ACP] + H(+). The protein operates within bacterial outer membrane biogenesis; LPS lipid A biosynthesis. Catalyzes the N-acylation of UDP-3-O-acylglucosamine using 3-hydroxyacyl-ACP as the acyl donor. Is involved in the biosynthesis of lipid A, a phosphorylated glycolipid that anchors the lipopolysaccharide to the outer membrane of the cell. This is UDP-3-O-acylglucosamine N-acyltransferase from Rickettsia rickettsii.